Here is a 329-residue protein sequence, read N- to C-terminus: GTP 3',8-cyclase (329 aa).

Residues 8 to 234 (AFARKFYYLR…QIRQRSDGPA (227 aa)) enclose the Radical SAM core domain. Arginine 17 is a binding site for GTP. Residues cysteine 24 and cysteine 28 each contribute to the [4Fe-4S] cluster site. An S-adenosyl-L-methionine-binding site is contributed by tyrosine 30. Cysteine 31 lines the [4Fe-4S] cluster pocket. Residue arginine 68 coordinates GTP. Glycine 72 lines the S-adenosyl-L-methionine pocket. Residue threonine 99 participates in GTP binding. S-adenosyl-L-methionine is bound at residue serine 123. Lysine 160 serves as a coordination point for GTP. Residue methionine 194 participates in S-adenosyl-L-methionine binding. The [4Fe-4S] cluster site is built by cysteine 257 and cysteine 260. 262–264 (RLR) provides a ligand contact to GTP. Residue cysteine 274 participates in [4Fe-4S] cluster binding.

Belongs to the radical SAM superfamily. MoaA family. In terms of assembly, monomer and homodimer. It depends on [4Fe-4S] cluster as a cofactor.

The enzyme catalyses GTP + AH2 + S-adenosyl-L-methionine = (8S)-3',8-cyclo-7,8-dihydroguanosine 5'-triphosphate + 5'-deoxyadenosine + L-methionine + A + H(+). It functions in the pathway cofactor biosynthesis; molybdopterin biosynthesis. In terms of biological role, catalyzes the cyclization of GTP to (8S)-3',8-cyclo-7,8-dihydroguanosine 5'-triphosphate. In Klebsiella pneumoniae subsp. pneumoniae (strain ATCC 700721 / MGH 78578), this protein is GTP 3',8-cyclase.